Reading from the N-terminus, the 284-residue chain is Bifunctional protein FolD (284 aa).

NADP(+) is bound by residues 164-166 (GRG), serine 189, and isoleucine 230.

The protein belongs to the tetrahydrofolate dehydrogenase/cyclohydrolase family. Homodimer.

It carries out the reaction (6R)-5,10-methylene-5,6,7,8-tetrahydrofolate + NADP(+) = (6R)-5,10-methenyltetrahydrofolate + NADPH. It catalyses the reaction (6R)-5,10-methenyltetrahydrofolate + H2O = (6R)-10-formyltetrahydrofolate + H(+). It participates in one-carbon metabolism; tetrahydrofolate interconversion. Functionally, catalyzes the oxidation of 5,10-methylenetetrahydrofolate to 5,10-methenyltetrahydrofolate and then the hydrolysis of 5,10-methenyltetrahydrofolate to 10-formyltetrahydrofolate. The polypeptide is Bifunctional protein FolD (Desulforamulus reducens (strain ATCC BAA-1160 / DSM 100696 / MI-1) (Desulfotomaculum reducens)).